Reading from the N-terminus, the 255-residue chain is Small ribosomal subunit protein uS2 (255 aa).

This sequence belongs to the universal ribosomal protein uS2 family.

In Streptococcus uberis (strain ATCC BAA-854 / 0140J), this protein is Small ribosomal subunit protein uS2.